The sequence spans 500 residues: E3 ubiquitin-protein ligase TRIM69 (500 aa).

Residues 1–152 (MEVSTNPSSN…SVGQSKEFLQ (152 aa)) form a necessary for nuclear localization region. The segment at 41-82 (CPLCNDWFRDPLMLSCGHNFCEACIQDFWRLQAKETFCPECK) adopts an RING-type zinc-finger fold. Positions 161-255 (TEELAIQQGQ…QCLLAKDMLV (95 aa)) form a coiled coil. The region spanning 305–500 (PIQYMVWREM…KEPLHILHPQ (196 aa)) is the B30.2/SPRY domain. Phosphoserine is present on Ser341.

This sequence belongs to the TRIM/RBCC family. As to quaternary structure, homo-multimer; required for antiviral activity. Interacts with PML. Phosphorylated. Phosphorylation is necessary for nuclear localization.

The protein localises to the cytoplasm. The protein resides in the nucleus. It localises to the nucleus speckle. Its subcellular location is the cytoskeleton. It is found in the microtubule organizing center. The protein localises to the centrosome. The catalysed reaction is S-ubiquitinyl-[E2 ubiquitin-conjugating enzyme]-L-cysteine + [acceptor protein]-L-lysine = [E2 ubiquitin-conjugating enzyme]-L-cysteine + N(6)-ubiquitinyl-[acceptor protein]-L-lysine.. Its pathway is protein modification; protein ubiquitination. In terms of biological role, E3 ubiquitin ligase that plays an important role in antiviral immunity by restricting different viral infections including dengue virus or vesicular stomatitis indiana virus. Ubiquitinates viral proteins such as dengue virus NS3 thereby limiting infection. In addition, acts as a key mediator of type I interferon induced microtubule stabilization by directly associating to microtubules independently of its E3 ligase activity. Also plays a role in cataract formation together with TP53. Mechanistically, inhibits UVB-induced cell apoptosis and reactive oxygen species (ROS) production by inducing TP53 ubiquitination. Regulates centrosome dynamics and mitotic progression by ubiquitinating STK3/MST2; leading to its redistribution to the perinuclear cytoskeleton and subsequent phosphorylation by PLK1. The polypeptide is E3 ubiquitin-protein ligase TRIM69 (TRIM69) (Homo sapiens (Human)).